The primary structure comprises 194 residues: Xanthine phosphoribosyltransferase (194 aa).

Leu20 and Asn27 together coordinate xanthine. Ala128 to Ala132 contacts 5-phospho-alpha-D-ribose 1-diphosphate. Position 156 (Lys156) interacts with xanthine.

This sequence belongs to the purine/pyrimidine phosphoribosyltransferase family. Xpt subfamily. In terms of assembly, homodimer.

It localises to the cytoplasm. It catalyses the reaction XMP + diphosphate = xanthine + 5-phospho-alpha-D-ribose 1-diphosphate. It functions in the pathway purine metabolism; XMP biosynthesis via salvage pathway; XMP from xanthine: step 1/1. In terms of biological role, converts the preformed base xanthine, a product of nucleic acid breakdown, to xanthosine 5'-monophosphate (XMP), so it can be reused for RNA or DNA synthesis. This is Xanthine phosphoribosyltransferase from Lachnoclostridium phytofermentans (strain ATCC 700394 / DSM 18823 / ISDg) (Clostridium phytofermentans).